We begin with the raw amino-acid sequence, 188 residues long: Ras-related protein Rap-1 (188 aa).

Position 10 to 17 (10 to 17 (GSGGVGKS)) interacts with GTP. Positions 32 to 40 (YDPTIEDSY) match the Effector region motif. Residues 57 to 61 (DTAGT) and 116 to 119 (NKCD) each bind GTP.

This sequence belongs to the small GTPase superfamily. Ras family.

It catalyses the reaction GTP + H2O = GDP + phosphate + H(+). Required in the hypodermis for proper formation of the cuticle. The protein is Ras-related protein Rap-1 (rap-1) of Caenorhabditis elegans.